Reading from the N-terminus, the 1025-residue chain is DNA polymerase (1025 aa).

This sequence belongs to the DNA polymerase type-B family.

It catalyses the reaction DNA(n) + a 2'-deoxyribonucleoside 5'-triphosphate = DNA(n+1) + diphosphate. Its function is as follows. Replicates the viral genome. Host DNA polymerases cannot substitute for the viral enzyme in this process. The polypeptide is DNA polymerase (Noctuidae (owlet moths)).